Here is a 107-residue protein sequence, read N- to C-terminus: Somatoliberin (107 aa).

The signal sequence occupies residues 1–19 (MPLWVFFVILTLTNGSHCS). Residues 20-30 (PSPSLPFRIRR) constitute a propeptide that is removed on maturation. Leucine amide is present on Leu-74. A propeptide spanning residues 77 to 107 (QVDSMWADHRQMSLESLLAALLQKHSRDSQG) is cleaved from the precursor.

This sequence belongs to the glucagon family.

It localises to the secreted. In terms of biological role, GRF is released by the hypothalamus and acts on the adenohypophyse to stimulate the secretion of growth hormone. This chain is Somatoliberin (GHRH), found in Mesocricetus auratus (Golden hamster).